Reading from the N-terminus, the 266-residue chain is Ras-like protein family member 12 (266 aa).

GTP is bound by residues 27-34, 74-78, and 134-137; these read GRRGAGKS, DTADL, and NKLD.

Belongs to the small GTPase superfamily. Ras family.

It catalyses the reaction GTP + H2O = GDP + phosphate + H(+). In Mus musculus (Mouse), this protein is Ras-like protein family member 12 (Rasl12).